We begin with the raw amino-acid sequence, 463 residues long: Chromosomal replication initiator protein DnaA (463 aa).

The segment at 1 to 83 (MSLSLWQQCL…LRFEVGSKPI (83 aa)) is domain I, interacts with DnaA modulators. Residues 83–126 (IVPVAVSSAASSGASVPPAAVRASSLARPSWERVTAQPELSYRS) form a domain II region. The interval 127–343 (NVNPKHTFDN…GALNRVIANA (217 aa)) is domain III, AAA+ region. ATP is bound by residues Gly-171, Gly-173, Lys-174, and Thr-175. Residues 344–463 (NFTGRAITID…FSNLIRTLSS (120 aa)) form a domain IV, binds dsDNA region.

It belongs to the DnaA family. In terms of assembly, oligomerizes as a right-handed, spiral filament on DNA at oriC.

Its subcellular location is the cytoplasm. In terms of biological role, plays an essential role in the initiation and regulation of chromosomal replication. ATP-DnaA binds to the origin of replication (oriC) to initiate formation of the DNA replication initiation complex once per cell cycle. Binds the DnaA box (a 9 base pair repeat at the origin) and separates the double-stranded (ds)DNA. Forms a right-handed helical filament on oriC DNA; dsDNA binds to the exterior of the filament while single-stranded (ss)DNA is stabiized in the filament's interior. The ATP-DnaA-oriC complex binds and stabilizes one strand of the AT-rich DNA unwinding element (DUE), permitting loading of DNA polymerase. After initiation quickly degrades to an ADP-DnaA complex that is not apt for DNA replication. Binds acidic phospholipids. The polypeptide is Chromosomal replication initiator protein DnaA (Edwardsiella ictaluri (strain 93-146)).